Reading from the N-terminus, the 1510-residue chain is Cysteine-tryptophan domain-containing zinc finger protein 5 (1510 aa).

A compositionally biased stretch (polar residues) spans 174–196; that stretch reads YCQRTSSENDSNHSQQLLNSGPE. 4 disordered regions span residues 174–198, 449–497, 555–574, and 582–616; these read YCQR…PEQK, SSLD…CAKD, KPNY…YVLD, and LHTE…DHKI. Residues 454-465 show a composition bias toward basic and acidic residues; it reads GFSHKTKSDKCN. Over residues 467–476 the composition is skewed to polar residues; it reads QPVTTSSQLQ. Composition is skewed to basic and acidic residues over residues 479-497 and 556-574; these read PAKK…CAKD and PNYD…YVLD. The segment at 645–698 adopts a CW-type zinc-finger fold; that stretch reads SEPVDQWVCCDKCETWRLLPYGMNSDTLPKKWRCSMQSWLPGMNNCKLSEGETT. Positions 654, 657, 678, and 690 each coordinate Zn(2+). The segment covering 768 to 780 has biased composition (basic and acidic residues); that stretch reads KQKRIESSDKGEK. Disordered stretches follow at residues 768 to 893, 1003 to 1050, and 1149 to 1194; these read KQKR…RDLF, STAA…LDRH, and LPIH…VRPD. Over residues 781–790 the composition is skewed to polar residues; the sequence is STVTISSGQT. Residues 874–893 show a composition bias toward basic and acidic residues; that stretch reads NSDRGARASDAGKSDPRDLF. Residues 1003–1016 show a composition bias toward low complexity; that stretch reads STAATSSSSKVSSS. Composition is skewed to polar residues over residues 1026–1040 and 1162–1182; these read TRTS…SPLR and PDQN…QAKL.

As to expression, highly expressed in young panicles. Expressed at low levels in leaf sheaths, nodes, internodes and axillary buds.

It localises to the nucleus. Functionally, binds to histones H3K4me1, H3K4me2 and H3K4me3 in GST pull-down assay. May facilitate the recruitment of effectors to mediate gene expression. This Oryza sativa subsp. japonica (Rice) protein is Cysteine-tryptophan domain-containing zinc finger protein 5.